The following is a 982-amino-acid chain: Chromosome partition protein Smc (982 aa).

33-40 (PNGSGKSN) is an ATP binding site. Coiled-coil stretches lie at residues 171 to 231 (RYTK…ELAV), 280 to 310 (SADM…VIID), and 337 to 377 (QTQL…QIEK). Positions 416 to 535 (TGILNTLGTF…AKDLNSAINL (120 aa)) constitute an SMC hinge domain. Coiled-coil stretches lie at residues 575-718 (SASL…SARE) and 753-822 (VKLS…IASN).

Belongs to the SMC family. In terms of assembly, homodimer.

Its subcellular location is the cytoplasm. Required for chromosome condensation and partitioning. This chain is Chromosome partition protein Smc, found in Mycoplasma genitalium (strain ATCC 33530 / DSM 19775 / NCTC 10195 / G37) (Mycoplasmoides genitalium).